The following is a 138-amino-acid chain: Large ribosomal subunit protein uL16c (138 aa).

This sequence belongs to the universal ribosomal protein uL16 family. Part of the 50S ribosomal subunit.

It is found in the plastid. The protein resides in the chloroplast. This Phaeodactylum tricornutum (strain CCAP 1055/1) protein is Large ribosomal subunit protein uL16c.